The following is a 152-amino-acid chain: MQVFEGKLNGKGLKIGIIVSRFNEFITQKLLAGALDCLTRHEVENTNIDVIWVPGAFEIPLVAKRAVHKDYDAIICLGAVIRGATPHFDYVAAEVAKGIAAVGLEANKPVIFGVLTTDTIEQAIERAGTKAGNKGWEAALAAIEMANLFKKV.

5-amino-6-(D-ribitylamino)uracil-binding positions include Phe-22, 56–58, and 79–81; these read AFE and AVI. Residue 84–85 participates in (2S)-2-hydroxy-3-oxobutyl phosphate binding; that stretch reads AT. His-87 serves as the catalytic Proton donor. Phe-112 contributes to the 5-amino-6-(D-ribitylamino)uracil binding site. Arg-126 lines the (2S)-2-hydroxy-3-oxobutyl phosphate pocket.

It belongs to the DMRL synthase family.

The enzyme catalyses (2S)-2-hydroxy-3-oxobutyl phosphate + 5-amino-6-(D-ribitylamino)uracil = 6,7-dimethyl-8-(1-D-ribityl)lumazine + phosphate + 2 H2O + H(+). It functions in the pathway cofactor biosynthesis; riboflavin biosynthesis; riboflavin from 2-hydroxy-3-oxobutyl phosphate and 5-amino-6-(D-ribitylamino)uracil: step 1/2. Functionally, catalyzes the formation of 6,7-dimethyl-8-ribityllumazine by condensation of 5-amino-6-(D-ribitylamino)uracil with 3,4-dihydroxy-2-butanone 4-phosphate. This is the penultimate step in the biosynthesis of riboflavin. This Carboxydothermus hydrogenoformans (strain ATCC BAA-161 / DSM 6008 / Z-2901) protein is 6,7-dimethyl-8-ribityllumazine synthase.